The primary structure comprises 165 residues: Large ribosomal subunit protein uL10 (165 aa).

Belongs to the universal ribosomal protein uL10 family. Part of the ribosomal stalk of the 50S ribosomal subunit. The N-terminus interacts with L11 and the large rRNA to form the base of the stalk. The C-terminus forms an elongated spine to which L12 dimers bind in a sequential fashion forming a multimeric L10(L12)X complex.

Its function is as follows. Forms part of the ribosomal stalk, playing a central role in the interaction of the ribosome with GTP-bound translation factors. This is Large ribosomal subunit protein uL10 from Mycoplasmopsis synoviae (strain 53) (Mycoplasma synoviae).